The sequence spans 203 residues: Glycerol-3-phosphate acyltransferase (203 aa).

5 helical membrane-spanning segments follow: residues 6–26 (LTLA…AVLV), 56–76 (AAAM…YVAF), 82–102 (AVSL…PIFF), 118–138 (APIG…VVLI), and 141–161 (YSSL…WYFD).

The protein belongs to the PlsY family. Probably interacts with PlsX.

It localises to the cell inner membrane. It catalyses the reaction an acyl phosphate + sn-glycerol 3-phosphate = a 1-acyl-sn-glycero-3-phosphate + phosphate. It functions in the pathway lipid metabolism; phospholipid metabolism. In terms of biological role, catalyzes the transfer of an acyl group from acyl-phosphate (acyl-PO(4)) to glycerol-3-phosphate (G3P) to form lysophosphatidic acid (LPA). This enzyme utilizes acyl-phosphate as fatty acyl donor, but not acyl-CoA or acyl-ACP. In Shewanella loihica (strain ATCC BAA-1088 / PV-4), this protein is Glycerol-3-phosphate acyltransferase.